Consider the following 559-residue polypeptide: DNA primase (559 aa).

The CHC2-type zinc finger occupies 37–61 (CPFHEERSASFSVNQIKGFYHCFGC). Positions 246 to 327 (KQVIVTEGYL…RGGVILFENN (82 aa)) constitute a Toprim domain. Residues Glu252, Asp296, and Asp298 each contribute to the Mg(2+) site.

It belongs to the DnaG primase family. As to quaternary structure, monomer. The C-terminal domain DnaB-binding domain exists as a dimer in solution. Interacts with DnaB via its C-terminal domain (residues 415-559 of DnaG); up to 3 DnaG fragments bind to a DnaB hexamer. The cofactor is Zn(2+). Mg(2+) serves as cofactor.

It catalyses the reaction ssDNA + n NTP = ssDNA/pppN(pN)n-1 hybrid + (n-1) diphosphate.. Functionally, RNA polymerase that catalyzes the synthesis of short RNA molecules used as primers for DNA polymerase during DNA replication. Stimulates the 5'-3' DNA helicase activity of DnaB. This chain is DNA primase, found in Helicobacter pylori (strain ATCC 700392 / 26695) (Campylobacter pylori).